The following is a 313-amino-acid chain: Nodulation protein D 3 (313 aa).

The 58-residue stretch at 6 to 63 folds into the HTH lysR-type domain; it reads LDLNLLVALDALMTKRSVTAAARSINLSQPAMSSAIARLRSYFQDELFRMQGRELITT. The segment at residues 23-42 is a DNA-binding region (H-T-H motif); the sequence is VTAAARSINLSQPAMSSAIA.

Belongs to the LysR transcriptional regulatory family.

Its function is as follows. NodD regulates the expression of the nodABCFE genes which encode other nodulation proteins. NodD is also a negative regulator of its own expression. Binds flavonoids as inducers. The chain is Nodulation protein D 3 (nodD3) from Rhizobium meliloti (strain 1021) (Ensifer meliloti).